The primary structure comprises 242 residues: MNPEEFRAALAAQGIDLTATQEQQFADYYQFLVATNEHVNLTTITAEPDVYLKHFYDSLTPAFYVSALRTEPLTLCDVGAGAGFPSLPLKIVFPQLQVTIVDSLNKRITFLNELAAKLNLTGVAFHHARAEEFGGKRAANREGFDLVTARAVARMSVLSELCLPLVKVGGQFVALKAAQTENELAVSQKAITTLGGKLQADEAFNLPVSNDPRHIVVIDKVKTTPKRYPRKAGTPNKEPLED.

S-adenosyl-L-methionine contacts are provided by residues Gly79, Phe84, 130-131, and Arg150; that span reads AE.

This sequence belongs to the methyltransferase superfamily. RNA methyltransferase RsmG family.

The protein resides in the cytoplasm. Its function is as follows. Specifically methylates the N7 position of a guanine in 16S rRNA. The chain is Ribosomal RNA small subunit methyltransferase G from Levilactobacillus brevis (strain ATCC 367 / BCRC 12310 / CIP 105137 / JCM 1170 / LMG 11437 / NCIMB 947 / NCTC 947) (Lactobacillus brevis).